The sequence spans 226 residues: MNPILINRLQRKLGYTFQQYELLLQALTHRSASSKHNERLEFLGDSILSFVIANALYHRFPKVDEGDMSRMRATLVRGNTLAEIAREFELGECLRLGPGELKSGGFRRESILADTVEALIGGIFLDSDIQTIERLILNWYQTRLDEISPGDKQKDPKTRLQEFLQGRHLPLPTYLVVQVRGEAHDQEFTIHCQVSGFSESVIGTGSSRRKAEQAAAEQALKKLELE.

In terms of domain architecture, RNase III spans 6 to 128 (INRLQRKLGY…LIGGIFLDSD (123 aa)). Glu41 contacts Mg(2+). Asp45 is a catalytic residue. 2 residues coordinate Mg(2+): Asp114 and Glu117. The active site involves Glu117. The DRBM domain maps to 155–225 (DPKTRLQEFL…AEQALKKLEL (71 aa)).

The protein belongs to the ribonuclease III family. In terms of assembly, homodimer. Mg(2+) is required as a cofactor.

Its subcellular location is the cytoplasm. The enzyme catalyses Endonucleolytic cleavage to 5'-phosphomonoester.. Functionally, digests double-stranded RNA. Involved in the processing of primary rRNA transcript to yield the immediate precursors to the large and small rRNAs (23S and 16S). Processes some mRNAs, and tRNAs when they are encoded in the rRNA operon. Processes pre-crRNA and tracrRNA of type II CRISPR loci if present in the organism. This chain is Ribonuclease 3, found in Pectobacterium carotovorum subsp. carotovorum (strain PC1).